The following is a 432-amino-acid chain: D-amino acid dehydrogenase (432 aa).

3 to 17 (VVILGSGVVGVASAW) is a binding site for FAD.

Belongs to the DadA oxidoreductase family. The cofactor is FAD.

It carries out the reaction a D-alpha-amino acid + A + H2O = a 2-oxocarboxylate + AH2 + NH4(+). The protein operates within amino-acid degradation; D-alanine degradation; NH(3) and pyruvate from D-alanine: step 1/1. Oxidative deamination of D-amino acids. This chain is D-amino acid dehydrogenase, found in Shigella boydii serotype 18 (strain CDC 3083-94 / BS512).